The primary structure comprises 440 residues: Argininosuccinate lyase (440 aa).

The protein belongs to the lyase 1 family. Argininosuccinate lyase subfamily.

It is found in the cytoplasm. It catalyses the reaction 2-(N(omega)-L-arginino)succinate = fumarate + L-arginine. It participates in amino-acid biosynthesis; L-arginine biosynthesis; L-arginine from L-ornithine and carbamoyl phosphate: step 3/3. The chain is Argininosuccinate lyase from Clostridium botulinum (strain Langeland / NCTC 10281 / Type F).